A 197-amino-acid polypeptide reads, in one-letter code: Segregation and condensation protein B (197 aa).

Belongs to the ScpB family. In terms of assembly, homodimer. Homodimerization may be required to stabilize the binding of ScpA to the Smc head domains. Component of a cohesin-like complex composed of ScpA, ScpB and the Smc homodimer, in which ScpA and ScpB bind to the head domain of Smc. The presence of the three proteins is required for the association of the complex with DNA.

The protein localises to the cytoplasm. In terms of biological role, participates in chromosomal partition during cell division. May act via the formation of a condensin-like complex containing Smc and ScpA that pull DNA away from mid-cell into both cell halves. This is Segregation and condensation protein B from Halalkalibacterium halodurans (strain ATCC BAA-125 / DSM 18197 / FERM 7344 / JCM 9153 / C-125) (Bacillus halodurans).